The primary structure comprises 226 residues: ATP synthase subunit a (226 aa).

Helical transmembrane passes span 17-37, 79-99, 105-125, 134-154, 176-196, and 199-219; these read FSYF…AMMA, LVAT…LPGF, SLNL…FEGI, FAHF…IEIV, LFLM…AYVL, and FMAF…LAGA.

The protein belongs to the ATPase A chain family. F-type ATPases have 2 components, CF(1) - the catalytic core - and CF(0) - the membrane proton channel. CF(1) has five subunits: alpha(3), beta(3), gamma(1), delta(1), epsilon(1). CF(0) has three main subunits: a(1), b(2) and c(9-12). The alpha and beta chains form an alternating ring which encloses part of the gamma chain. CF(1) is attached to CF(0) by a central stalk formed by the gamma and epsilon chains, while a peripheral stalk is formed by the delta and b chains.

It is found in the cell inner membrane. Its function is as follows. Key component of the proton channel; it plays a direct role in the translocation of protons across the membrane. The protein is ATP synthase subunit a of Campylobacter jejuni subsp. doylei (strain ATCC BAA-1458 / RM4099 / 269.97).